The following is a 188-amino-acid chain: Apolipoprotein M (188 aa).

Residues 1 to 22 (MFHQIWAALLYFYGIILNSIYQ) constitute a signal peptide (not cleaved). Disulfide bonds link C23/C167, C95/C183, and C128/C157. N135 carries an N-linked (GlcNAc...) asparagine glycan. 2 residues coordinate tetradecanoate: E136 and R143.

The protein belongs to the calycin superfamily. Lipocalin family. Highly divergent. As to quaternary structure, interacts with LRP2; LRP2 mediates APOM renal uptake and subsequent lysosomal degradation.

The protein localises to the secreted. Its function is as follows. Probably involved in lipid transport. Can bind sphingosine-1-phosphate, myristic acid, palmitic acid and stearic acid, retinol, all-trans-retinoic acid and 9-cis-retinoic acid. This Pongo abelii (Sumatran orangutan) protein is Apolipoprotein M (APOM).